The chain runs to 81 residues: RNA-binding protein Hfq (81 aa).

The Sm domain occupies 9-68; it reads DPYLNILRKERVPVSIFLVNGIKLQGQIESFDQFVILLKNTVSQMVYKHAISTVVPSRTI.

The protein belongs to the Hfq family. In terms of assembly, homohexamer.

In terms of biological role, RNA chaperone that binds small regulatory RNA (sRNAs) and mRNAs to facilitate mRNA translational regulation in response to envelope stress, environmental stress and changes in metabolite concentrations. Also binds with high specificity to tRNAs. The sequence is that of RNA-binding protein Hfq from Marinomonas sp. (strain MWYL1).